Reading from the N-terminus, the 854-residue chain is Glucans biosynthesis glucosyltransferase H (854 aa).

7 consecutive transmembrane segments (helical) span residues 155-175 (ILLV…KTIL), 209-229 (ILVL…TALM), 528-548 (VFLT…FLML), 583-603 (IALF…SVIL), 619-639 (FISL…RMLF), 671-691 (FVRH…MAWL), and 695-715 (FLWW…VSVY).

This sequence belongs to the glycosyltransferase 2 family. OpgH subfamily.

Its subcellular location is the cell inner membrane. It functions in the pathway glycan metabolism; osmoregulated periplasmic glucan (OPG) biosynthesis. Functionally, involved in the biosynthesis of osmoregulated periplasmic glucans (OPGs). This Pectobacterium carotovorum subsp. carotovorum (strain PC1) protein is Glucans biosynthesis glucosyltransferase H.